Consider the following 129-residue polypeptide: D-ribose pyranase 2 (129 aa).

The active-site Proton donor is the H20. Substrate is bound by residues D28, H96, and 118 to 120 (YAN).

This sequence belongs to the RbsD / FucU family. RbsD subfamily. In terms of assembly, homodecamer.

The protein localises to the cytoplasm. It carries out the reaction beta-D-ribopyranose = beta-D-ribofuranose. The protein operates within carbohydrate metabolism; D-ribose degradation; D-ribose 5-phosphate from beta-D-ribopyranose: step 1/2. Its function is as follows. Catalyzes the interconversion of beta-pyran and beta-furan forms of D-ribose. The protein is D-ribose pyranase 2 of Streptomyces griseus subsp. griseus (strain JCM 4626 / CBS 651.72 / NBRC 13350 / KCC S-0626 / ISP 5235).